The following is a 287-amino-acid chain: Cell wall-binding protein YocH (287 aa).

The first 25 residues, 1–25 (MKKTIMSFVAVAALSTTAFGAHASA), serve as a signal peptide directing secretion. 2 LysM domains span residues 26–69 (KEIT…KLTI) and 78–121 (GQYT…TLSV). Positions 130-143 (TATENAQTNAPQAA) are enriched in low complexity. Residues 130–193 (TATENAQTNA…SNTNNQEASK (64 aa)) are disordered. A compositionally biased stretch (basic and acidic residues) spans 165–181 (QETKAEAETSVNTEEKA). Residues 182–193 (VQSNTNNQEASK) show a composition bias toward polar residues.

It is found in the secreted. The protein resides in the cell wall. The protein is Cell wall-binding protein YocH (yocH) of Bacillus subtilis (strain 168).